Here is a 367-residue protein sequence, read N- to C-terminus: Quinolinate synthase (367 aa).

Iminosuccinate-binding residues include His-45 and Ser-62. Cys-109 contributes to the [4Fe-4S] cluster binding site. Iminosuccinate contacts are provided by residues 140–142 and Ser-161; that span reads YVN. Cys-229 serves as a coordination point for [4Fe-4S] cluster. Iminosuccinate contacts are provided by residues 255 to 257 and Thr-272; that span reads HPE. Cys-319 provides a ligand contact to [4Fe-4S] cluster.

It belongs to the quinolinate synthase family. Type 3 subfamily. Requires [4Fe-4S] cluster as cofactor.

The protein localises to the cytoplasm. It carries out the reaction iminosuccinate + dihydroxyacetone phosphate = quinolinate + phosphate + 2 H2O + H(+). It functions in the pathway cofactor biosynthesis; NAD(+) biosynthesis; quinolinate from iminoaspartate: step 1/1. Its function is as follows. Catalyzes the condensation of iminoaspartate with dihydroxyacetone phosphate to form quinolinate. The protein is Quinolinate synthase of Geobacillus kaustophilus (strain HTA426).